The primary structure comprises 539 residues: Protein PNS1 (539 aa).

The tract at residues 1–38 is disordered; sequence MPLNEKYERPPQPPPAYDPNHRPPSSSENSAAANVNDG. Topologically, residues 1-81 are cytoplasmic; it reads MPLNEKYERP…NDNKPRWNDW (81 aa). Low complexity predominate over residues 25–36; that stretch reads SSSENSAAANVN. A helical transmembrane segment spans residues 82 to 102; that stretch reads PFTIFFLCTVGGFIAIAAITL. At 103 to 129 the chain is on the extracellular side; that stretch reads RAWSQTYSSTGSGIYDGVNTGTLNTNA. A helical transmembrane segment spans residues 130-150; it reads AILLVFVCIIALVFSVLGLTL. Residues 151-157 lie on the Cytoplasmic side of the membrane; sequence CRIFPKQ. Residues 158 to 178 form a helical membrane-spanning segment; sequence FIYCGMVINLVASLGTAIMYM. At 179 to 182 the chain is on the extracellular side; sequence SLRY. A helical membrane pass occupies residues 183 to 203; that stretch reads WSAGIVFLVFTFMTAWCYWGM. Topologically, residues 204 to 226 are cytoplasmic; that stretch reads RSRIPLSVAVLKVVVDAMKKCPQ. The helical transmembrane segment at 227-247 threads the bilayer; the sequence is IFFVSFVGALVASAFGFLFSA. Residues 248 to 274 lie on the Extracellular side of the membrane; the sequence is VIVATYIKYDPNSSNGGCDVSGGSCSH. N259 carries an N-linked (GlcNAc...) asparagine glycan. The helical transmembrane segment at 275 to 295 threads the bilayer; it reads SKLIGVLVVVFFCGYYISEVI. At 296–332 the chain is on the cytoplasmic side; it reads RNVIHCVISGVFGSWYYMSKSDQGMPRWPAFGALKRA. Residues 333–353 traverse the membrane as a helical segment; it reads MTYSFGSICFGSLLVALIDLL. Residues 354–371 lie on the Extracellular side of the membrane; sequence RQILQMIRHDVTSSGGGQ. The helical transmembrane segment at 372–392 threads the bilayer; sequence IAIQILFMVFDWIIGFLKWLA. The Cytoplasmic portion of the chain corresponds to 393-436; sequence EYFNHYAYSFIALYGKPYLRAAKETWYMLREKGMDALINDNLIN. A helical membrane pass occupies residues 437 to 457; that stretch reads IALGLFSMFASYMTALFTFLY. Topologically, residues 458–473 are extracellular; that stretch reads LRFTSPQYNSNGAYNG. The helical transmembrane segment at 474 to 494 threads the bilayer; that stretch reads ALMAFSFVIALQICNIATEAI. Topologically, residues 495-539 are cytoplasmic; it reads RSGTATFFVALGNDPEVFHHSYPHRFDEIFRAYPDVLRKLSHQNV.

The protein belongs to the CTL (choline transporter-like) family.

The protein resides in the cell membrane. In terms of biological role, probably involved in transport through the plasma membrane. The chain is Protein PNS1 (PNS1) from Saccharomyces cerevisiae (strain ATCC 204508 / S288c) (Baker's yeast).